Here is a 274-residue protein sequence, read N- to C-terminus: Large ribosomal subunit protein uL2 (274 aa).

Disordered stretches follow at residues 28 to 54 (APHA…TRHI) and 224 to 274 (VAMN…RRRK). Positions 263-274 (KRTDKMIVRRRK) are enriched in basic and acidic residues.

The protein belongs to the universal ribosomal protein uL2 family. As to quaternary structure, part of the 50S ribosomal subunit. Forms a bridge to the 30S subunit in the 70S ribosome.

Its function is as follows. One of the primary rRNA binding proteins. Required for association of the 30S and 50S subunits to form the 70S ribosome, for tRNA binding and peptide bond formation. It has been suggested to have peptidyltransferase activity; this is somewhat controversial. Makes several contacts with the 16S rRNA in the 70S ribosome. The chain is Large ribosomal subunit protein uL2 from Pseudomonas savastanoi pv. phaseolicola (strain 1448A / Race 6) (Pseudomonas syringae pv. phaseolicola (strain 1448A / Race 6)).